We begin with the raw amino-acid sequence, 1615 residues long: DNA-directed RNA polymerase I subunit rpa1 (1615 aa).

Positions 65, 68, 75, and 78 each coordinate Zn(2+). Residues 155–181 are disordered; the sequence is GKSNEEGEEVMESDESDSDKMDTDENK. Residues 160 to 171 show a composition bias toward acidic residues; the sequence is EGEEVMESDESD. Residues 172–181 are compositionally biased toward basic and acidic residues; that stretch reads SDKMDTDENK. Mg(2+)-binding residues include D593, D595, and D597. The tract at residues 955 to 967 is bridging helix; the sequence is PQDYFFHCMAGRE. Residues 1305–1316 are compositionally biased toward acidic residues; sequence DSLTINDDDAPA. The segment at 1305–1411 is disordered; the sequence is DSLTINDDDA…NSRSSNSFSD (107 aa). Residues 1317-1336 show a composition bias toward low complexity; that stretch reads NDDTTNNDENTSQQQPSSQN. A compositionally biased stretch (acidic residues) spans 1366–1399; the sequence is EDGEEEAEEKDSDEGESEAEESDDKSDVDSDSDE. A compositionally biased stretch (low complexity) spans 1400-1411; that stretch reads ISNSRSSNSFSD.

Belongs to the RNA polymerase beta' chain family. As to quaternary structure, component of the RNA polymerase I (Pol I) complex consisting of at least 13 subunits.

It localises to the nucleus. The catalysed reaction is RNA(n) + a ribonucleoside 5'-triphosphate = RNA(n+1) + diphosphate. DNA-dependent RNA polymerase catalyzes the transcription of DNA into RNA using the four ribonucleoside triphosphates as substrates. Largest and catalytic core component of RNA polymerase I which synthesizes ribosomal RNA precursors. Forms the polymerase active center together with the second largest subunit. A single stranded DNA template strand of the promoter is positioned within the central active site cleft of Pol I. A bridging helix emanates from RPA1 and crosses the cleft near the catalytic site and is thought to promote translocation of Pol I by acting as a ratchet that moves the RNA-DNA hybrid through the active site by switching from straight to bent conformations at each step of nucleotide addition. The chain is DNA-directed RNA polymerase I subunit rpa1 (polr1a) from Dictyostelium discoideum (Social amoeba).